Reading from the N-terminus, the 235-residue chain is Putative HAD-hydrolase YfnB (235 aa).

Residue Asp10 is the Nucleophile of the active site.

The protein belongs to the HAD-like hydrolase superfamily. YjjG family.

This is Putative HAD-hydrolase YfnB (yfnB) from Bacillus subtilis (strain 168).